A 253-amino-acid polypeptide reads, in one-letter code: Probable transcriptional regulatory protein RC0681 (253 aa).

Residues 1–21 (MAGHSKFKNIQHRKGAQDKKR) are disordered.

It belongs to the TACO1 family.

It is found in the cytoplasm. This chain is Probable transcriptional regulatory protein RC0681, found in Rickettsia conorii (strain ATCC VR-613 / Malish 7).